We begin with the raw amino-acid sequence, 380 residues long: Transcription factor RF2a (380 aa).

Residues Met-1–Ile-57 are disordered. The segment covering Leu-16–Ala-33 has biased composition (low complexity). The activation of RTBV promoter stretch occupies residues Glu-56 to Glu-108. The 64-residue stretch at Asp-181 to Leu-244 folds into the bZIP domain. The basic motif stretch occupies residues Lys-183–Arg-204. The segment at Leu-209 to Leu-244 is leucine-zipper. The segment at Gly-283 to Asp-357 is interaction with TBP2. Residues Gln-326–Ala-355 show a composition bias toward low complexity. The interval Gln-326–Asn-380 is disordered.

The protein belongs to the bZIP family. Binds DNA as a homodimer or as a heterodimer with RF2b. The heterodimer binds stronger to DNA than the homodimer. Interacts with TBP2. As to expression, expressed at high levels in levels in leaf sheath, moderate levels in leaf blade, but not in roots. Predominantly expressed in vascular tissues.

It is found in the nucleus. Transcription factor probably involved in vascular development and shoot tissue organization. Binds to the DNA sequence 5'-CCGAGTGTGCCCCTGG-3' present in the promoter region Box II of the phloem-specific rice tungro bacilliform virus (RTBV) promoter. May regulate tissue-specific expression of the RTBV promoter and virus replication. This Oryza sativa subsp. japonica (Rice) protein is Transcription factor RF2a (RF2a).